Consider the following 313-residue polypeptide: Ribosomal RNA small subunit methyltransferase H (313 aa).

Residues 51–53 (GGH), Asp-71, Phe-98, Asp-119, and Gln-126 each bind S-adenosyl-L-methionine. The disordered stretch occupies residues 293–313 (EEQRANPRSRSARLRVAERVS).

This sequence belongs to the methyltransferase superfamily. RsmH family.

The protein localises to the cytoplasm. It carries out the reaction cytidine(1402) in 16S rRNA + S-adenosyl-L-methionine = N(4)-methylcytidine(1402) in 16S rRNA + S-adenosyl-L-homocysteine + H(+). In terms of biological role, specifically methylates the N4 position of cytidine in position 1402 (C1402) of 16S rRNA. The polypeptide is Ribosomal RNA small subunit methyltransferase H (Roseiflexus sp. (strain RS-1)).